A 507-amino-acid polypeptide reads, in one-letter code: Histidine ammonia-lyase (507 aa).

A cross-link (5-imidazolinone (Ala-Gly)) is located at residues 141-143 (ASG). At serine 142 the chain carries 2,3-didehydroalanine (Ser).

The protein belongs to the PAL/histidase family. Post-translationally, contains an active site 4-methylidene-imidazol-5-one (MIO), which is formed autocatalytically by cyclization and dehydration of residues Ala-Ser-Gly.

It is found in the cytoplasm. It carries out the reaction L-histidine = trans-urocanate + NH4(+). It participates in amino-acid degradation; L-histidine degradation into L-glutamate; N-formimidoyl-L-glutamate from L-histidine: step 1/3. This Burkholderia cenocepacia (strain HI2424) protein is Histidine ammonia-lyase.